The primary structure comprises 99 residues: Small integral membrane protein 14 (99 aa).

Residues 1–49 (MAEGGFDPCECICSHEHAMRRLINLLRQSQSYCTDTECLRELPGPSGDS) are Lumenal-facing. Residues 50-70 (GISITVILMAWMVIAVLLFLL) traverse the membrane as a helical segment. Over 71–99 (RPPNLRGSSLPGKPSSPHSGQDPPAPPVD) the chain is Cytoplasmic. The segment at 77 to 99 (GSSLPGKPSSPHSGQDPPAPPVD) is disordered.

The protein resides in the endoplasmic reticulum membrane. The protein is Small integral membrane protein 14 (Smim14) of Rattus norvegicus (Rat).